Reading from the N-terminus, the 426-residue chain is Phosphoribosylamine--glycine ligase (426 aa).

The region spanning 113 to 320 is the ATP-grasp domain; that stretch reads KSLMTEAKIP…LLELLYRAST (208 aa). Position 139–200 (139–200) interacts with ATP; the sequence is LESKSIPIVI…EEFMEGQEAS (62 aa). Mg(2+) is bound by residues glutamate 290 and asparagine 292.

This sequence belongs to the GARS family. It depends on Mg(2+) as a cofactor. Requires Mn(2+) as cofactor.

The enzyme catalyses 5-phospho-beta-D-ribosylamine + glycine + ATP = N(1)-(5-phospho-beta-D-ribosyl)glycinamide + ADP + phosphate + H(+). It functions in the pathway purine metabolism; IMP biosynthesis via de novo pathway; N(1)-(5-phospho-D-ribosyl)glycinamide from 5-phospho-alpha-D-ribose 1-diphosphate: step 2/2. In Leptospira interrogans serogroup Icterohaemorrhagiae serovar Lai (strain 56601), this protein is Phosphoribosylamine--glycine ligase.